The primary structure comprises 206 residues: SOSS complex subunit B2 (206 aa).

Residues 26-89 (IVLEIGRVTK…SMWKGCLTLY (64 aa)) constitute a DNA-binding region (OB). 2 disordered regions span residues 114-146 (EPNPDYRGQQNKGAHNEQKNNSMNNSNNVGTGT) and 166-206 (SYAG…AFKR). Residues 181–196 (LPGTANNQTVMTTISN) are compositionally biased toward polar residues.

The protein belongs to the SOSS-B family. SOSS-B2 subfamily. In terms of assembly, component of the SOSS complex, composed of SOSS-B (SOSS-B1/NABP2 or SOSS-B2/NABP1), SOSS-A/INTS3 and SOSS-C/INIP. SOSS complexes containing SOSS-B1/NABP2 are more abundant than complexes containing SOSS-B2/NABP1.

Its subcellular location is the nucleus. In terms of biological role, component of the SOSS complex, a multiprotein complex that functions downstream of the MRN complex to promote DNA repair and G2/M checkpoint. In the SOSS complex, acts as a sensor of single-stranded DNA that binds to single-stranded DNA, in particular to polypyrimidines. The SOSS complex associates with DNA lesions and influences diverse endpoints in the cellular DNA damage response including cell-cycle checkpoint activation, recombinational repair and maintenance of genomic stability. Required for efficient homologous recombination-dependent repair of double-strand breaks (DSBs) and ATM-dependent signaling pathways. The protein is SOSS complex subunit B2 (NABP1) of Bos taurus (Bovine).